A 205-amino-acid polypeptide reads, in one-letter code: Imidazoleglycerol-phosphate dehydratase (205 aa).

This sequence belongs to the imidazoleglycerol-phosphate dehydratase family.

The protein localises to the cytoplasm. The catalysed reaction is D-erythro-1-(imidazol-4-yl)glycerol 3-phosphate = 3-(imidazol-4-yl)-2-oxopropyl phosphate + H2O. Its pathway is amino-acid biosynthesis; L-histidine biosynthesis; L-histidine from 5-phospho-alpha-D-ribose 1-diphosphate: step 6/9. This chain is Imidazoleglycerol-phosphate dehydratase, found in Chloroflexus aurantiacus (strain ATCC 29366 / DSM 635 / J-10-fl).